A 336-amino-acid polypeptide reads, in one-letter code: MTLILPKDYHPSLTIRDTEAAIVFIRENFQDKIADKLNLQRMSAPMFVEKSTGLNDNLNGIERPVAFDMKAMPDDTIEVVHSLAKWKRLALKRYGFGMHEGLYTNMNAIRRDEDLDNFHSIYVDQWDWEKIIAKEERNIETLKTTVKQIFKAIKETEKELSARYPGSTYRLPSDITFITTQELEDRWPDLAPEEREDKIAKEKKAVFLMKIGDKLKRSGKPHDGRAPDYDDWELNGDLLFWYEPLKRKIEISSMGIRVSEESLKEQLKKAHTEERSDLPFHKMLLEGKLPYTIGGGIGQSRLCMLLLGKAHIGEVQASIWPPEMIESCKAADIKIL.

Belongs to the class-II aminoacyl-tRNA synthetase family. AsnA subfamily.

Its subcellular location is the cytoplasm. It carries out the reaction L-aspartate + NH4(+) + ATP = L-asparagine + AMP + diphosphate + H(+). It participates in amino-acid biosynthesis; L-asparagine biosynthesis; L-asparagine from L-aspartate (ammonia route): step 1/1. The chain is Aspartate--ammonia ligase from Lactobacillus johnsonii (strain CNCM I-12250 / La1 / NCC 533).